Here is a 220-residue protein sequence, read N- to C-terminus: Membrane steroid-binding protein 1 (220 aa).

A helical membrane pass occupies residues 22-42 (VVFFTALALAFAIYQVISGWF). The Cytochrome b5 heme-binding domain maps to 74 to 171 (EITEEELKQY…SKYAKVGTVK (98 aa)). The segment at 74 to 171 (EITEEELKQY…SKYAKVGTVK (98 aa)) is steroid-binding. A disordered region spans residues 174–220 (GSEPETASVSEPTENVEQDAHVTTTPGKTVVDKSDDAPAETVLKKEE). Polar residues predominate over residues 178–200 (ETASVSEPTENVEQDAHVTTTPG). The span at 203–220 (VVDKSDDAPAETVLKKEE) shows a compositional bias: basic and acidic residues.

This sequence belongs to the cytochrome b5 family. MAPR subfamily. As to quaternary structure, interacts with BAK1 (via extracellular region). In terms of tissue distribution, expressed in cotyledons, stems, roots, leaves, flower and silique stalks, pistils and stigmas, but not in anthers.

Its subcellular location is the cell membrane. The protein localises to the endosome membrane. Functionally, MSBP1 can bind to multiple steroid compounds with different affinities. Negatively regulates cell elongation and brassinosteroid signaling. May act as a coreceptor with BAK1 and enhances its endocytosis. This Arabidopsis thaliana (Mouse-ear cress) protein is Membrane steroid-binding protein 1 (MSBP1).